The chain runs to 552 residues: Scavenger receptor class B member 1 (552 aa).

Topologically, residues 1–11 (MGCSAKARWAA) are cytoplasmic. A helical membrane pass occupies residues 12 to 32 (GALGVAGLLCAVLGAVMIVMV). The Extracellular portion of the chain corresponds to 33–443 (PSLIKQQVLK…LVLMPKVMHY (411 aa)). 9 N-linked (GlcNAc...) asparagine glycosylation sites follow: Asn102, Asn108, Asn173, Asn212, Asn227, Asn255, Asn310, Asn330, and Asn383. Cys251 and Cys384 form a disulfide bridge. Residues Tyr393 and Val458 each carry the phosphoserine modification. The chain crosses the membrane as a helical span at residues 444–464 (AQYVLLALGCVLLLVPVICQI). Residue Cys462 is the site of S-palmitoyl cysteine attachment. At 465–552 (RSQVGAGQRA…GPSLGGGTGS (88 aa)) the chain is on the cytoplasmic side. Thr493 bears the Phosphoserine mark.

The protein belongs to the CD36 family. As to quaternary structure, the C-terminal region binds to PDZK1. (Microbial infection) Interacts with hepatitis C virus E1:E2 glycoproteins. In terms of processing, N-glycosylated. The six cysteines of the extracellular domain are all involved in intramolecular disulfide bonds. As to expression, widely expressed.

It localises to the cell membrane. The protein resides in the membrane. The protein localises to the caveola. Functionally, receptor for different ligands such as phospholipids, cholesterol ester, lipoproteins, phosphatidylserine and apoptotic cells. Receptor for HDL, mediating selective uptake of cholesteryl ether and HDL-dependent cholesterol efflux. Also facilitates the flux of free and esterified cholesterol between the cell surface and apoB-containing lipoproteins and modified lipoproteins, although less efficiently than HDL. May be involved in the phagocytosis of apoptotic cells, via its phosphatidylserine binding activity. (Microbial infection) Acts as a receptor for hepatitis C virus in hepatocytes and appears to facilitate its cell entry. Binding between SCARB1 and the hepatitis C virus glycoprotein E2 is independent of the genotype of the viral isolate. Its function is as follows. (Microbial infection) Mediates uptake of M.fortuitum, E.coli and S.aureus. In terms of biological role, (Microbial infection) Facilitates the entry of human coronavirus SARS-CoV-2 by acting as an entry cofactor through HDL binding. In Homo sapiens (Human), this protein is Scavenger receptor class B member 1 (SCARB1).